The sequence spans 482 residues: ADP-ribosylation factor GTPase-activating protein effector protein 1 (482 aa).

Residues 116–156 form a disordered region; the sequence is QHKSTHSHHINHQTHPIHSSSSNSNSNNRIPTKTDSSKQHT. The span at 118-127 shows a compositional bias: basic residues; sequence KSTHSHHINH. Positions 134–143 are enriched in low complexity; it reads SSSSNSNSNN. Positions 170 to 297 constitute an Arf-GAP domain; it reads DELLSIVRKI…FVIDSNQGRE (128 aa). Residues 186 to 210 form a C4-type zinc finger; sequence CCDCGSTATVEWVSINLLCILCIKC.

Its subcellular location is the cytoplasm. In terms of biological role, GTPase-activating protein (GAP) for the ADP ribosylation factors ARF1 and ARF2. May be involved in the endocytic pathway. The chain is ADP-ribosylation factor GTPase-activating protein effector protein 1 (AGE1) from Saccharomyces cerevisiae (strain ATCC 204508 / S288c) (Baker's yeast).